An 85-amino-acid polypeptide reads, in one-letter code: Putative membrane protein insertion efficiency factor (85 aa).

The protein belongs to the UPF0161 family.

The protein resides in the cell inner membrane. Its function is as follows. Could be involved in insertion of integral membrane proteins into the membrane. The chain is Putative membrane protein insertion efficiency factor from Serratia proteamaculans (strain 568).